The sequence spans 550 residues: Gamma-aminobutyric acid receptor subunit beta (550 aa).

An N-terminal signal peptide occupies residues Met1–Cys24. The Extracellular portion of the chain corresponds to Gln25–Phe264. N-linked (GlcNAc...) asparagine glycans are attached at residues Asn26, Asn32, Asn33, Asn45, Asn53, and Asn193. Cys180 and Cys194 are oxidised to a cystine. A run of 3 helical transmembrane segments spans residues Ile265–Ile285, Ala292–Val311, and Ile324–Ala344. Over Val345 to Arg527 the chain is Cytoplasmic. The interval Ala405 to His465 is disordered. Residues Met406–Thr421 show a composition bias toward polar residues. A helical membrane pass occupies residues Val528–Val548.

The protein belongs to the ligand-gated ion channel (TC 1.A.9) family. Gamma-aminobutyric acid receptor (TC 1.A.9.5) subfamily.

The protein localises to the postsynaptic cell membrane. The protein resides in the cell membrane. Its function is as follows. GABA, an inhibitory neurotransmitter, mediates neuronal inhibition by binding to the GABA receptor and opening an integral chloride channel. This chain is Gamma-aminobutyric acid receptor subunit beta (gab-1), found in Caenorhabditis elegans.